We begin with the raw amino-acid sequence, 330 residues long: MAESAPLKIVFMGTPDFAAASLRHLLAWDGCDVVGVYTQPDRPCGRGQQCRPSAVKMLALEHGLDVRQPVSFRDEADVQALRDFGADILVVAAYGLILPQSVLDAAPMGAVNVHGSLLPRYRGAAPIQRAVMNGDAVTGITIMQVVKQLDAGPMLLQKALGIGCDETSGQLHDQLAELGGRLLVETLARLRAGTIMPIPQDDALATYAAKLTKADGLVDWNRTAVEVHAQVRGVTPWPAAYFTLRREGQKDVRVTIEPGTIGPLLEQPAVPGTIVGLVDGAIAFACADRTYLVRTIRPADKKPMTGEAFWCGYLSRCEGECPGFAVCEGA.

(6S)-5,6,7,8-tetrahydrofolate is bound at residue 116 to 119 (SLLP).

It belongs to the Fmt family.

It catalyses the reaction L-methionyl-tRNA(fMet) + (6R)-10-formyltetrahydrofolate = N-formyl-L-methionyl-tRNA(fMet) + (6S)-5,6,7,8-tetrahydrofolate + H(+). In terms of biological role, attaches a formyl group to the free amino group of methionyl-tRNA(fMet). The formyl group appears to play a dual role in the initiator identity of N-formylmethionyl-tRNA by promoting its recognition by IF2 and preventing the misappropriation of this tRNA by the elongation apparatus. The sequence is that of Methionyl-tRNA formyltransferase from Nitratidesulfovibrio vulgaris (strain ATCC 29579 / DSM 644 / CCUG 34227 / NCIMB 8303 / VKM B-1760 / Hildenborough) (Desulfovibrio vulgaris).